The chain runs to 439 residues: Secreted aspartic protease LUC8 (439 aa).

Residues M1 to A20 form the signal peptide. N-linked (GlcNAc...) asparagine glycans are attached at residues N33 and N54. The region spanning Y51 to A435 is the Peptidase A1 domain. D69 is a catalytic residue. Residues N110, N126, N179, and N289 are each glycosylated (N-linked (GlcNAc...) asparagine). D300 is a catalytic residue. Residues N329 and N373 are each glycosylated (N-linked (GlcNAc...) asparagine). A disulfide bridge links C355 with C391.

It belongs to the peptidase A1 family.

The protein localises to the secreted. Secreted aspartic protease; part of the gene cluster that mediates the biosynthesis of the mycotoxin lucilactaene and the lucilactaene-related compound NG-391 that act as cell cycle inhibitors with potent growth inhibitory activity against malarial parasites, moderate growth inhibitory activity against cancer cells, and no activity against bacteria and fungi. Within the cluster, LUC7 and LUC8 encode proteins which are not commonly involved in the biosynthesis of secondary metabolites and are not essential for lucilactaene biosynthesis. The sequence is that of Secreted aspartic protease LUC8 from Fusarium sp.